The chain runs to 549 residues: Tight junction-associated protein 1 (549 aa).

A disordered region spans residues 1–34 (MSSAAPAKKPYRKAPPEHRELRLEIPVSRLEQEE). Residues 14–23 (APPEHRELRL) are compositionally biased toward basic and acidic residues. A coiled-coil region spans residues 42-171 (MKLLQQENEE…EELNERYRLD (130 aa)). 2 disordered regions span residues 207 to 226 (RSGQ…LSPG) and 266 to 322 (VDMS…PLYP). S295 is subject to Phosphoserine. Over residues 311–320 (YPTPSPPHPL) the composition is skewed to pro residues. T313 bears the Phosphothreonine mark. S315 and S340 each carry phosphoserine. 3 disordered regions span residues 359–404 (EDGS…SEED), 410–429 (QRAF…RTAF), and 434–549 (LPEL…TVLS). Residues 369–383 (SVPSSPASAQGSPHH) show a composition bias toward polar residues. The segment covering 389–400 (PSALSAPASSAS) has biased composition (low complexity). T417 bears the Phosphothreonine mark. Phosphoserine is present on S483. A compositionally biased stretch (basic and acidic residues) spans 485–498 (EEERQSLLPDKEGT). Residues 522-534 (RSPKRMGVHHLHR) are compositionally biased toward basic residues. Phosphoserine is present on S537. Residues 538–549 (LTQAQEQGTVLS) show a composition bias toward polar residues.

In terms of assembly, interacts with DLG1. Interacts with ARF6 (GTP-bound form). In terms of tissue distribution, widely expressed including in adult thymus, heart, lung, liver, small intestine, kidney, spleen, testis and skeletal muscle and in embryonic brain but not detected in adult brain (at protein level).

It is found in the golgi apparatus. The protein localises to the trans-Golgi network. The protein resides in the cell junction. It localises to the tight junction. Its subcellular location is the cell membrane. Functionally, plays a role in regulating the structure of the Golgi apparatus. This chain is Tight junction-associated protein 1, found in Mus musculus (Mouse).